The primary structure comprises 754 residues: RNA-directed RNA polymerase catalytic subunit (754 aa).

2 consecutive short sequence motifs (nuclear localization signal) follow at residues 189–197 and 205–218; these read VVRREKDKR and KVPV…KHDE. The promoter-binding site stretch occupies residues 251–258; that stretch reads RPFSKIVE. Positions 288 to 484 constitute a RdRp catalytic domain; it reads VTSLNARMNS…GINMSLEKSY (197 aa).

The protein belongs to the influenza viruses polymerase PB1 family. Influenza RNA polymerase is composed of three subunits: PB1, PB2 and PA. Interacts (via N-terminus) with PA (via C-terminus). Interacts (via C-terminus) with PB2 (via N-terminus); this interaction is essential for transcription initiation. In terms of processing, phosphorylated by host PRKCA.

The protein localises to the host nucleus. Its subcellular location is the host cytoplasm. It carries out the reaction RNA(n) + a ribonucleoside 5'-triphosphate = RNA(n+1) + diphosphate. Its function is as follows. RNA-dependent RNA polymerase which is responsible for replication and transcription of virus RNA segments. The transcription of viral mRNAs occurs by a unique mechanism called cap-snatching. 5' methylated caps of cellular mRNAs are cleaved after 10-13 nucleotides by PA. In turn, these short capped RNAs are used as primers by PB1 for transcription of viral mRNAs. During virus replication, PB1 initiates RNA synthesis and copy vRNA into complementary RNA (cRNA) which in turn serves as a template for the production of more vRNAs. This is RNA-directed RNA polymerase catalytic subunit from Influenza C virus (strain C/Johannesburg/1/1966).